Here is a 210-residue protein sequence, read N- to C-terminus: Probable membrane protein MT1774 (210 aa).

A run of 2 helical transmembrane segments spans residues 43-63 (AVVM…AAAA) and 165-185 (ALAA…LLAL).

It localises to the cell membrane. This Mycobacterium tuberculosis (strain CDC 1551 / Oshkosh) protein is Probable membrane protein MT1774.